The chain runs to 226 residues: MDILIISLKSLGYSRTSRPLDSGPLVVHAVAGAGKSTALRKLLARHSTFTIHTLGVPDKISIRTRGIQKPGPIPKGNFAILDEYTLDATTREAYQALFADPYQAPELSLEPHFYLETSFRTPKKAAALIASCGFDFETNSQEEGHLEVTGIFKGPLLGKVIAIDSEAETTLSRHGVEFVKPCQVTGLEFPVVTIVSAAPIEEIGQSTLFYNAITRSKGLTYVRAGT.

Positions 1-138 (MDILIISLKS…IASCGFDFET (138 aa)) constitute a (+)RNA virus helicase ATP-binding domain. The (+)RNA virus helicase C-terminal domain occupies 139–226 (NSQEEGHLEV…KGLTYVRAGT (88 aa)).

This sequence belongs to the Tymovirales TGBp1 protein family. Homodimer and homooligomer. Interacts with capsid protein. Interacts with host AGO1; this interaction targets the host protein for degradation, thereby suppressing the antiviral RNA silencing.

The protein localises to the host cytoplasm. In terms of biological role, transports viral genome to neighboring plant cells directly through plasmosdesmata, without any budding. The movement protein allows efficient cell to cell propagation, by bypassing the host cell wall barrier. Increases plasmodesma size exclusion limit. Acts as a suppressor of RNA-mediated gene silencing, also known as post-transcriptional gene silencing (PTGS), a mechanism of plant viral defense that limits the accumulation of viral RNAs. In Brassica campestris (Field mustard), this protein is Movement and silencing protein TGBp1.